Reading from the N-terminus, the 495-residue chain is Glycerol kinase (495 aa).

Thr13 contacts ADP. ATP is bound by residues Thr13, Thr14, and Ser15. Thr13 provides a ligand contact to sn-glycerol 3-phosphate. Arg17 contributes to the ADP binding site. 4 residues coordinate sn-glycerol 3-phosphate: Arg83, Glu84, Tyr135, and Asp244. 5 residues coordinate glycerol: Arg83, Glu84, Tyr135, Asp244, and Gln245. ADP contacts are provided by Thr266 and Gly309. ATP-binding residues include Thr266, Gly309, Gln313, and Gly410. Residues Gly410 and Asn414 each coordinate ADP.

Belongs to the FGGY kinase family.

It catalyses the reaction glycerol + ATP = sn-glycerol 3-phosphate + ADP + H(+). It participates in polyol metabolism; glycerol degradation via glycerol kinase pathway; sn-glycerol 3-phosphate from glycerol: step 1/1. With respect to regulation, inhibited by fructose 1,6-bisphosphate (FBP). In terms of biological role, key enzyme in the regulation of glycerol uptake and metabolism. Catalyzes the phosphorylation of glycerol to yield sn-glycerol 3-phosphate. The chain is Glycerol kinase from Shewanella woodyi (strain ATCC 51908 / MS32).